A 630-amino-acid chain; its full sequence is Pentatricopeptide repeat-containing protein At1g63130, mitochondrial (630 aa).

The transit peptide at 1 to 22 (MRRLFAISSTGNRFVHRSLLGK) directs the protein to the mitochondrion. PPR repeat units follow at residues 80-114 (SIVE…GISH), 115-149 (NLYT…GYEP), 150-184 (DIVT…GYQP), 185-219 (DSFT…GCQP), 220-254 (DLVT…KIEP), 255-289 (GVVI…GIRP), 290-324 (NVVT…KINP), 325-359 (NVVT…SIDP), 360-394 (DIFT…DCFP), 395-429 (NVVT…GLVG), 430-464 (NTVT…GVLP), 465-499 (DIMT…KMEP), 500-534 (DIYT…GVKP), 535-569 (NVVT…GPLP), and 570-604 (DSGT…RFVG).

This sequence belongs to the PPR family. P subfamily.

Its subcellular location is the mitochondrion. This Arabidopsis thaliana (Mouse-ear cress) protein is Pentatricopeptide repeat-containing protein At1g63130, mitochondrial.